The primary structure comprises 143 residues: Large ribosomal subunit protein uL11 (143 aa).

The protein belongs to the universal ribosomal protein uL11 family. As to quaternary structure, part of the ribosomal stalk of the 50S ribosomal subunit. Interacts with L10 and the large rRNA to form the base of the stalk. L10 forms an elongated spine to which L12 dimers bind in a sequential fashion forming a multimeric L10(L12)X complex. Post-translationally, one or more lysine residues are methylated.

Forms part of the ribosomal stalk which helps the ribosome interact with GTP-bound translation factors. This chain is Large ribosomal subunit protein uL11, found in Cellvibrio japonicus (strain Ueda107) (Pseudomonas fluorescens subsp. cellulosa).